Here is a 270-residue protein sequence, read N- to C-terminus: L-cystine-binding protein TcyK (270 aa).

Residues 1-20 (MKTKTAFMAILFSLITVLSA) form the signal peptide. The N-palmitoyl cysteine moiety is linked to residue cysteine 21. A lipid anchor (S-diacylglycerol cysteine) is attached at cysteine 21.

It belongs to the bacterial solute-binding protein 3 family. In terms of assembly, the complex is composed of two ATP-binding proteins (TcyN), two transmembrane proteins (TcyL and TcyM) and two solute-binding proteins (TcyJ and TcyK).

Its subcellular location is the cell membrane. Its function is as follows. Part of the ABC transporter complex TcyJKLMN involved in L-cystine import. Is also involved in cystathionine, djenkolate, and S-methylcysteine transport. In Bacillus subtilis (strain 168), this protein is L-cystine-binding protein TcyK (tcyK).